The primary structure comprises 2873 residues: Fibrillin-1 (2873 aa).

The signal sequence occupies residues 1–24 (MRRGGLLEVALAFALLLESYTSHG). Residues 25–44 (ADANLEAGSLKETRANRAKR) constitute a propeptide that is removed on maturation. The fibrillin unique N-terminal (FUN) domain stretch occupies residues 45 to 81 (RGGGGHDALKGPNVCGSRYNAYCCPGWKTLPGGNQCI). Residues 45-452 (RGGGGHDALK…PPRVLPFNVT (408 aa)) are N-terminal domain. 11 cysteine pairs are disulfide-bonded: Cys-59/Cys-68, Cys-67/Cys-80, Cys-85/Cys-94, Cys-89/Cys-100, Cys-102/Cys-111, Cys-119/Cys-129, Cys-123/Cys-134, Cys-136/Cys-145, Cys-150/Cys-160, Cys-154/Cys-166, and Cys-168/Cys-177. EGF-like domains are found at residues 81-112 (IVPI…PSCG), 115-146 (SIQH…THCG), and 147-178 (QPVC…PQCE). Positions 119–329 (CSIRCMNGGS…YTSPDGTRCV (211 aa)) are interaction with MFAP4. Positions 184-236 (GPCFTVVSNQMCQGQLSGIVCTKTLCCATVGRAWGHPCEMCPAQPHPCRRGFI) constitute a TB 1 domain. Positions 195 to 221 (CQGQLSGIVCTKTLCCATVGRAWGHPC) are hybrid domain 1. The EGF-like 4; calcium-binding domain maps to 246–287 (DVDECQAIPGMCQGGNCINTVGSFECKCPAGHKFNEVSQKCE). 6 cysteine pairs are disulfide-bonded: Cys-250/Cys-262, Cys-257/Cys-271, Cys-273/Cys-286, Cys-292/Cys-304, Cys-299/Cys-313, and Cys-315/Cys-328. An O-linked (Glc) serine glycan is attached at Ser-268. One can recognise an EGF-like 5; calcium-binding domain in the interval 288 to 329 (DIDECSTIPGVCDGGECTNTVSSYFCKCPPGFYTSPDGTRCV). One can recognise a TB 2 domain in the interval 334–389 (GYCYTALANGRCSNQLPQSITKMQCCCDLGRCWSPGVTVAPEMCPIRSTEDFNKLC). The N-linked (GlcNAc...) asparagine glycan is linked to Asn-450. The 41-residue stretch at 451-491 (VTDYCQLVRYLCQNGRCIPTPGSYRCECNKGFQLDIRGECI) folds into the EGF-like 6 domain. Intrachain disulfides connect Cys-455-Cys-467, Cys-462-Cys-476, Cys-478-Cys-490, Cys-496-Cys-506, Cys-501-Cys-515, Cys-517-Cys-530, Cys-536-Cys-548, Cys-543-Cys-557, Cys-559-Cys-572, Cys-578-Cys-589, Cys-584-Cys-598, Cys-600-Cys-613, Cys-619-Cys-630, Cys-625-Cys-639, and Cys-641-Cys-654. O-linked (Glc) serine glycosylation occurs at Ser-473. One can recognise an EGF-like 7; calcium-binding domain in the interval 492-531 (DVDECEKNPCTGGECINNQGSYTCHCRAGYQSTLTRTECR). Ser-512 carries an O-linked (Glc) serine glycan. One can recognise an EGF-like 8; calcium-binding domain in the interval 532 to 573 (DIDECLQNGRICNNGRCINTDGSFHCVCNAGFHVTRDGKNCE). The EGF-like 9; calcium-binding domain occupies 574-614 (DMDECSIRNMCLNGMCINEDGSFKCICKPGFQLASDGRYCK). An EGF-like 10; calcium-binding domain is found at 615–655 (DINECETPGICMNGRCVNTDGSYRCECFPGLAVGLDGRVCV). The region spanning 661 to 713 (STCYGGYRRGQCVKPLFGAVTKSECCCASTEYAFGEPCQPCPAQNSAEYQALC) is the TB 3 domain. In terms of domain architecture, EGF-like 11; calcium-binding spans 725 to 766 (DINECALDPDICPNGICENLRGTYKCICNSGYEVDITGKNCV). 16 cysteine pairs are disulfide-bonded: Cys-729-Cys-741, Cys-736-Cys-750, Cys-752-Cys-765, Cys-771-Cys-783, Cys-778-Cys-792, Cys-794-Cys-807, Cys-813-Cys-823, Cys-818-Cys-832, Cys-834-Cys-847, Cys-855-Cys-877, Cys-864-Cys-889, Cys-878-Cys-892, Cys-898-Cys-910, Cys-916-Cys-928, Cys-923-Cys-937, and Cys-939-Cys-952. Residues 767-808 (DINECVLNSLLCDNGQCRNTPGSFVCTCPKGFVYKPDLKTCE) enclose the EGF-like 12; calcium-binding domain. The region spanning 809 to 848 (DIDECESSPCINGVCKNSPGSFICECSPESTLDPTKTICI) is the EGF-like 13; calcium-binding domain. A TB 4 domain is found at 853–904 (GTCWQTVIDGRCEININGATLKSECCSSLGAAWGSPCTICQLDPICGKGFSR). A hybrid domain 2 region spans residues 862-887 (GRCEININGATLKSECCSSLGAAWGS). Residues 912–953 (DINECEVFPGVCKNGLCVNSRGSFKCECPNGMTLDATGRICL) form the EGF-like 14; calcium-binding domain. Residues 958–1010 (ETCFLKYDDEECTLPIAGRHRMDACCCSVGAAWGTEECEECPLRNSREYEELC) form the TB 5 domain. The EGF-like 15; calcium-binding domain occupies 1030–1071 (DINECKMIPSLCTHGKCRNTIGSFKCRCDSGFALDSEERNCT). Intrachain disulfides connect Cys-1034-Cys-1046, Cys-1041-Cys-1055, Cys-1057-Cys-1070, Cys-1076-Cys-1088, Cys-1083-Cys-1097, Cys-1099-Cys-1113, Cys-1119-Cys-1131, Cys-1126-Cys-1140, Cys-1142-Cys-1155, Cys-1161-Cys-1173, Cys-1168-Cys-1182, Cys-1184-Cys-1197, Cys-1203-Cys-1214, Cys-1210-Cys-1223, Cys-1225-Cys-1238, Cys-1244-Cys-1256, Cys-1251-Cys-1265, Cys-1267-Cys-1280, Cys-1286-Cys-1298, Cys-1293-Cys-1307, Cys-1309-Cys-1322, Cys-1328-Cys-1341, Cys-1335-Cys-1350, Cys-1352-Cys-1363, Cys-1369-Cys-1382, Cys-1376-Cys-1391, Cys-1393-Cys-1404, Cys-1410-Cys-1422, Cys-1417-Cys-1431, Cys-1433-Cys-1446, Cys-1452-Cys-1463, Cys-1458-Cys-1472, Cys-1474-Cys-1487, Cys-1493-Cys-1504, Cys-1499-Cys-1513, Cys-1515-Cys-1528, Cys-1536-Cys-1564, Cys-1551-Cys-1576, Cys-1565-Cys-1579, Cys-1566-Cys-1591, Cys-1612-Cys-1624, Cys-1619-Cys-1633, Cys-1635-Cys-1648, Cys-1654-Cys-1665, Cys-1660-Cys-1674, and Cys-1676-Cys-1689. An N-linked (GlcNAc...) asparagine glycan is attached at Asn-1069. The region spanning 1072-1114 (DIDECRISPDLCGRGQCVNTPGDFECKCDEGYESGFMMMKNCM) is the EGF-like 16; calcium-binding domain. Positions 1115-1156 (DIDECQRDPLLCRGGICHNTEGSYRCECPPGHQLSPNISACI) constitute an EGF-like 17; calcium-binding domain. O-linked (Glc) serine glycosylation is present at Ser-1137. Asn-1151 carries N-linked (GlcNAc...) asparagine glycosylation. An EGF-like 18; calcium-binding domain is found at 1157 to 1198 (DINECELSANLCPHGRCVNLIGKYQCACNPGYHPTHDRLFCV). The region spanning 1199 to 1239 (DIDECSIMNGGCETFCTNSDGSYECSCQPGFALMPDQRSCT) is the EGF-like 19; calcium-binding domain. O-linked (Glc) serine glycosylation is present at Ser-1220. One can recognise an EGF-like 20; calcium-binding domain in the interval 1240–1281 (DIDECEDNPNICDGGQCTNIPGEYRCLCYDGFMASEDMKTCV). An EGF-like 21; calcium-binding domain is found at 1282 to 1323 (DVNECDLNPNICLSGTCENTKGSFICHCDMGYSGKKGKTGCT). The O-linked (Glc) serine glycan is linked to Ser-1304. In terms of domain architecture, EGF-like 22; calcium-binding spans 1324–1364 (DINECEIGAHNCGRHAVCTNTAGSFKCSCSPGWIGDGIKCT). O-linked (Glc) serine glycosylation occurs at Ser-1347. Residues 1365-1405 (DLDECSNGTHMCSQHADCKNTMGSYRCLCKDGYTGDGFTCT) form the EGF-like 23; calcium-binding domain. An N-linked (GlcNAc...) asparagine glycan is attached at Asn-1371. O-linked (Glc) serine glycosylation is present at Ser-1388. Positions 1406-1447 (DLDECSENLNLCGNGQCLNAPGGYRCECDMGFVPSADGKACE) constitute an EGF-like 24; calcium-binding domain. An EGF-like 25; calcium-binding domain is found at 1448–1488 (DIDECSLPNICVFGTCHNLPGLFRCECEIGYELDRSGGNCT). N-linked (GlcNAc...) asparagine glycosylation occurs at Asn-1486. The EGF-like 26; calcium-binding domain occupies 1489–1529 (DVNECLDPTTCISGNCVNTPGSYTCDCPPDFELNPTRVGCV). A glycan (O-linked (Glc) serine) is linked at Ser-1510. Residues 1530–2733 (DTRSGNCYLD…GYPKRGRKRR (1204 aa)) are C-terminal domain. Residues 1534-1591 (GNCYLDIRPRGDNGDTACSNEIGVGVSKASCCCSLGKAWGTPCELCPSVNTSEYKILC) enclose the TB 6 domain. Positions 1543-1545 (RGD) match the Cell attachment site motif. The N-linked (GlcNAc...) asparagine glycan is linked to Asn-1583. Positions 1608 to 1649 (DIDECQELPGLCQGGKCINTFGSFQCRCPTGYYLNEDTRVCD) constitute an EGF-like 27; calcium-binding domain. Ser-1630 carries O-linked (Glc) serine glycosylation. The EGF-like 28; calcium-binding domain maps to 1650 to 1690 (DVNECETPGICGPGTCYNTVGNYTCICPPDYMQVNGGNNCM). Residue Asn-1671 is glycosylated (N-linked (GlcNAc...) asparagine). Positions 1695–1750 (SLCYRNYYADNQTCDGELLFNMTKKMCCCSYNIGRAWNKPCEQCPIPSTDEFATLC) constitute a TB 7 domain. Asn-1705 and Asn-1715 each carry an N-linked (GlcNAc...) asparagine glycan. An EGF-like 29; calcium-binding domain is found at 1768–1809 (DIDECREIPGVCENGVCINMVGSFRCECPVGFFYNDKLLVCE). Intrachain disulfides connect Cys-1772–Cys-1784, Cys-1779–Cys-1793, Cys-1795–Cys-1808, Cys-1814–Cys-1826, Cys-1820–Cys-1835, Cys-1837–Cys-1849, Cys-1855–Cys-1867, Cys-1862–Cys-1876, Cys-1878–Cys-1891, Cys-1897–Cys-1907, Cys-1902–Cys-1916, Cys-1918–Cys-1930, Cys-1936–Cys-1949, Cys-1944–Cys-1958, Cys-1960–Cys-1973, Cys-1979–Cys-1991, Cys-1986–Cys-2000, Cys-2002–Cys-2013, Cys-2019–Cys-2031, Cys-2026–Cys-2040, Cys-2042–Cys-2055, Cys-2063–Cys-2085, Cys-2072–Cys-2098, Cys-2086–Cys-2101, Cys-2087–Cys-2113, Cys-2133–Cys-2144, Cys-2139–Cys-2153, Cys-2155–Cys-2166, Cys-2172–Cys-2183, Cys-2178–Cys-2192, Cys-2194–Cys-2206, Cys-2212–Cys-2223, Cys-2219–Cys-2232, Cys-2234–Cys-2247, Cys-2253–Cys-2267, Cys-2260–Cys-2276, Cys-2278–Cys-2291, Cys-2297–Cys-2309, Cys-2304–Cys-2318, and Cys-2320–Cys-2333. The EGF-like 30; calcium-binding domain occupies 1810–1850 (DIDECQNGPVCQRNAECINTAGSYRCDCKPGYRLTSTGQCN). Ser-1832 carries an O-linked (Glc) serine glycan. In terms of domain architecture, EGF-like 31; calcium-binding spans 1851 to 1892 (DRNECQEIPNICSHGQCIDTVGSFYCLCHTGFKTNVDQTMCL). Ser-1873 carries an O-linked (Glc) serine glycan. In terms of domain architecture, EGF-like 32; calcium-binding spans 1893–1931 (DINECERDACGNGTCRNTIGSFNCRCNHGFILSHNNDCI). N-linked (GlcNAc...) asparagine glycosylation occurs at Asn-1904. Ser-1913 carries an O-linked (Glc) serine glycan. The 43-residue stretch at 1932 to 1974 (DVDECATGNGNLCRNGQCVNTVGSFQCRCNEGYEVAPDGRTCV) folds into the EGF-like 33; calcium-binding domain. Residue Ser-1955 is glycosylated (O-linked (Glc) serine). The region spanning 1975-2014 (DINECVLDPGKCAPGTCQNLDGSYRCICPPGYSLQNDKCE) is the EGF-like 34; calcium-binding domain. In terms of domain architecture, EGF-like 35; calcium-binding spans 2015-2056 (DIDECVEEPEICALGTCSNTEGSFKCLCPEGFSLSSTGRRCQ). Ser-2037 carries O-linked (Glc) serine glycosylation. Residues 2061–2113 (SYCYAKFEGGKCSSPKSRNHSKQECCCALKGEGWGDPCELCPTEPDEAFRQIC) enclose the TB 8 domain. A glycan (N-linked (GlcNAc...) asparagine) is linked at Asn-2079. The 39-residue stretch at 2129–2167 (DMDECKEPDVCRHGQCINTDGSYRCECPFGYILEGNECV) folds into the EGF-like 36; calcium-binding domain. Residue Ser-2150 is glycosylated (O-linked (Glc) serine). The 40-residue stretch at 2168–2207 (DTDECSVGNPCGNGTCKNVIGGFECTCEEGFEPGPMMTCE) folds into the EGF-like 37; calcium-binding domain. A glycan (N-linked (GlcNAc...) asparagine) is linked at Asn-2180. The EGF-like 38; calcium-binding domain occupies 2208–2248 (DINECAQNPLLCAFRCVNTYGSYECKCPVGYVLREDRRMCK). A glycan (O-linked (Glc) serine) is linked at Ser-2229. Residues 2249–2292 (DEDECAEGKHDCTEKQMECKNLIGTYMCICGPGYQRRPDGEGCI) form the EGF-like 39; calcium-binding domain. An EGF-like 40; calcium-binding domain is found at 2293–2334 (DENECQTKPGICENGRCLNTLGSYTCECNDGFTASPTQDECL). Residue Ser-2315 is glycosylated (O-linked (Glc) serine). In terms of domain architecture, TB 9 spans 2339-2392 (GYCFSEVLQNMCQIGSSNRNPVTKSECCCDGGRGWGPHCEICPFEGTVAYKKLC). One can recognise an EGF-like 41; calcium-binding domain in the interval 2404–2445 (DIDECKVIHDVCRNGECVNDRGSYHCICKTGYTPDITGTACV). 21 disulfides stabilise this stretch: Cys-2408–Cys-2420, Cys-2415–Cys-2429, Cys-2431–Cys-2444, Cys-2450–Cys-2461, Cys-2457–Cys-2470, Cys-2472–Cys-2485, Cys-2491–Cys-2502, Cys-2498–Cys-2511, Cys-2513–Cys-2524, Cys-2530–Cys-2543, Cys-2537–Cys-2552, Cys-2554–Cys-2567, Cys-2573–Cys-2583, Cys-2579–Cys-2592, Cys-2594–Cys-2607, Cys-2613–Cys-2624, Cys-2619–Cys-2633, Cys-2635–Cys-2648, Cys-2654–Cys-2665, Cys-2661–Cys-2674, and Cys-2676–Cys-2688. An EGF-like 42; calcium-binding domain is found at 2446–2486 (DLNECNQAPKPCNFICKNTEGSYQCSCPKGYILQEDGRSCK). The O-linked (Glc) serine glycan is linked to Ser-2467. The EGF-like 43; calcium-binding domain maps to 2487 to 2525 (DLDECATKQHNCQFLCVNTIGGFTCKCPPGFTQHHTACI). In terms of domain architecture, EGF-like 44; calcium-binding spans 2526–2568 (DNNECTSDINLCGSKGVCQNTPGSFTCECQRGFSLDQSGASCE). Residue Ser-2549 is glycosylated (O-linked (Glc) serine). Positions 2569-2608 (DVDECEGNHRCQHGCQNIIGGYRCSCPQGYLQHYQWNQCV) constitute an EGF-like 45; calcium-binding domain. The EGF-like 46; calcium-binding domain occupies 2609–2649 (DENECLSAHVCGGASCHNTLGSYKCMCPTGFQYEQFSGGCQ). O-linked (Glc) serine glycosylation is present at Ser-2630. The 40-residue stretch at 2650–2689 (DINECGSSQAPCSYGCSNTEGGYLCGCPPGYFRIGQGHCV) folds into the EGF-like 47; calcium-binding domain. A phosphoserine mark is found at Ser-2704, Ser-2705, and Ser-2711. The tract at residues 2728 to 2747 (RGRKRRSTNETDASDIQDGS) is disordered. N-linked (GlcNAc...) asparagine glycans are attached at residues Asn-2736, Asn-2752, and Asn-2769.

Belongs to the fibrillin family. Interacts with COL16A1. Interacts with integrin alpha-V/beta-3. Interacts with ADAMTS10; this interaction promotes microfibril assembly. Interacts with THSD4; this interaction promotes fibril formation. Interacts (via N-terminal domain) with FBLN2 and FBLN5. Interacts with ELN. Forms a ternary complex with ELN and FBLN2 or FBLN5 and a significant interaction with ELN seen only in the presence of FBLN2 or FBLN5. Interacts (via N-terminal domain) with LTBP2 (via C-terminal domain) in a Ca(+2)-dependent manner. Interacts (via N-terminal domain) with LTBP1 (via C-terminal domain). Interacts with integrins ITGA5:ITGB1, ITGAV:ITGB3 and ITGAV:ITGB6. Interacts (via N-terminal domain) with BMP2, BMP4, BMP7, BMP10 and GDF5. Interacts (via N-terminal domain) with MFAP2 and MFAP5. Interacts with ADAMTSL5. Interacts with MFAP4. Interacts (via N-terminal domain) with TNFSF11 in a Ca(+2)-dependent manner. Interacts (via N-terminal domain) with EFEMP2; this interaction inhibits EFEMP2 binding to LOX and ELN. In terms of processing, cleavage of N- and C-terminus by furin is required for incorporation into the extracellular matrix and assembly into microfibrils. The C-terminus, which corresponds to the Asprosin chain, was initially thought to constitute a propeptide. Fibrillin-1 and Asprosin chains are still linked together during the secretion from cells, but are subsequently separated by furin, an essential step for incorporation of Fibrillin-1 into the nascent microfibrils. Post-translationally, forms intermolecular disulfide bonds either with other fibrillin-1 molecules or with other components of the microfibrils. O-glycosylated on serine residues by POGLUT2 and POGLUT3 which is necessary for efficient protein secretion. In terms of tissue distribution, strongly expressed during the first week of osteoblast differentiation. As to expression, secreted by white adipose tissue (at protein level).

It localises to the secreted. Its subcellular location is the extracellular space. The protein resides in the extracellular matrix. Its function is as follows. Structural component of the 10-12 nm diameter microfibrils of the extracellular matrix, which conveys both structural and regulatory properties to load-bearing connective tissues. Fibrillin-1-containing microfibrils provide long-term force bearing structural support. In tissues such as the lung, blood vessels and skin, microfibrils form the periphery of the elastic fiber, acting as a scaffold for the deposition of elastin. In addition, microfibrils can occur as elastin-independent networks in tissues such as the ciliary zonule, tendon, cornea and glomerulus where they provide tensile strength and have anchoring roles. Fibrillin-1 also plays a key role in tissue homeostasis through specific interactions with growth factors, such as the bone morphogenetic proteins (BMPs), growth and differentiation factors (GDFs) and latent transforming growth factor-beta-binding proteins (LTBPs), cell-surface integrins and other extracellular matrix protein and proteoglycan components. Regulates osteoblast maturation by controlling TGF-beta bioavailability and calibrating TGF-beta and BMP levels, respectively. Negatively regulates osteoclastogenesis by binding and sequestering an osteoclast differentiation and activation factor TNFSF11. This leads to disruption of TNFSF11-induced Ca(2+) signaling and impairment of TNFSF11-mediated nuclear translocation and activation of transcription factor NFATC1 which regulates genes important for osteoclast differentiation and function. Mediates cell adhesion via its binding to cell surface receptors integrins ITGAV:ITGB3 and ITGA5:ITGB1. Binds heparin and this interaction plays an important role in the assembly of microfibrils. In terms of biological role, adipokine secreted by white adipose tissue that plays an important regulatory role in the glucose metabolism of liver, muscle and pancreas. Hormone that targets the liver in response to fasting to increase plasma glucose levels. Binds the olfactory receptor Olfr734 at the surface of hepatocytes and promotes hepatocyte glucose release by activating the protein kinase A activity in the liver, resulting in rapid glucose release into the circulation. May act as a regulator of adaptive thermogenesis by inhibiting browning and energy consumption, while increasing lipid deposition in white adipose tissue. Also acts as an orexigenic hormone that increases appetite: crosses the blood brain barrier and exerts effects on the hypothalamus. In the arcuate nucleus of the hypothalamus, asprosin directly activates orexigenic AgRP neurons and indirectly inhibits anorexigenic POMC neurons, resulting in appetite stimulation. Activates orexigenic AgRP neurons via binding to the olfactory receptor Olfr734. May also play a role in sperm motility in testis via interaction with Olfr734 receptor. The polypeptide is Fibrillin-1 (Mus musculus (Mouse)).